A 750-amino-acid polypeptide reads, in one-letter code: MIIRSPEPEVKILVDRDPIKTSFEEWAKPGHFSRTIAKGPDTTTWIWNLHADAHDFDSHTSDLEEISRKVFSAHFGQLSIIFLWLSGMYFHGARFSNYEAWLSDPTHIGPSAQVVWPIVGQEILNGDVGGGFRGIQITSGFFQIWRASGITSELQLYCTAIGALVFAALMLFAGWFHYHKAAPKLAWFQDVESMLNHHLAGLLGLGSLSWAGHQVHVSLPINQFLNAGVDPKEIPLPHEFILNRDLLAQLYPSFAEGATPFFTLNWSKYSEFLTFRGGLDPVTGGLWLTDIAHHHLAIAILFLIAGHMYRTNWGIGHGIKDILEAHKGPFTGQGHKGLYEILTTSWHAQLSLNLAMLGSLTIIVAHHMYSMPPYPYLATDYATQLSLFTHHMWIGGFLIVGAAAHAAIFMVRDYDPTNRYNDLLDRVLRHRDAIISHLNWVCIFLGFHSFGLYIHNDTMSALGRPQDMFSDTAIQLQPVFAQWIQNTHALAPGVTAPGETASTSLTWGGGELVAVGGKVALLPIPLGTADFLVHHIHAFTIHVTVLILLKGVLFARSSRLIPDKANLGFRFPCDGPGRGGTCQVSAWDHVFLGLFWMYNAISVVIFHFSWKMQSDVWGSISDQGVVTHITGGNFAQSSITINGWLRDFLWAQASQVIQSYGSSLSAYGLFFLGAHFVWAFSLMFLFSGRGYWQELIESIVWAHNKLKVAPATQPRALSIIQGRAVGVTHYLLGGIATTWAFFLARIIAVG.

Helical transmembrane passes span 70–93, 156–179, 195–219, 291–309, 346–369, 385–411, 433–455, and 531–549; these read VFSA…FHGA, LYCT…FHYH, LNHH…HVSL, IAHH…GHMY, WHAQ…HHMY, LSLF…IFMV, AIIS…LYIH, and FLVH…LILL. Residues Cys-573 and Cys-582 each coordinate [4Fe-4S] cluster. 2 helical membrane-spanning segments follow: residues 589–610 and 664–686; these read HVFL…HFSW and LSAY…MFLF. Residue His-675 coordinates chlorophyll a'. Met-683 and Tyr-691 together coordinate chlorophyll a. Trp-692 contributes to the phylloquinone binding site. A helical transmembrane segment spans residues 724–744; the sequence is AVGVTHYLLGGIATTWAFFLA.

It belongs to the PsaA/PsaB family. As to quaternary structure, the PsaA/B heterodimer binds the P700 chlorophyll special pair and subsequent electron acceptors. PSI consists of a core antenna complex that captures photons, and an electron transfer chain that converts photonic excitation into a charge separation. The eukaryotic PSI reaction center is composed of at least 11 subunits. P700 is a chlorophyll a/chlorophyll a' dimer, A0 is one or more chlorophyll a, A1 is one or both phylloquinones and FX is a shared 4Fe-4S iron-sulfur center. serves as cofactor.

The protein localises to the plastid. It localises to the chloroplast thylakoid membrane. The enzyme catalyses reduced [plastocyanin] + hnu + oxidized [2Fe-2S]-[ferredoxin] = oxidized [plastocyanin] + reduced [2Fe-2S]-[ferredoxin]. PsaA and PsaB bind P700, the primary electron donor of photosystem I (PSI), as well as the electron acceptors A0, A1 and FX. PSI is a plastocyanin-ferredoxin oxidoreductase, converting photonic excitation into a charge separation, which transfers an electron from the donor P700 chlorophyll pair to the spectroscopically characterized acceptors A0, A1, FX, FA and FB in turn. Oxidized P700 is reduced on the lumenal side of the thylakoid membrane by plastocyanin. This Arabidopsis thaliana (Mouse-ear cress) protein is Photosystem I P700 chlorophyll a apoprotein A1.